We begin with the raw amino-acid sequence, 531 residues long: Jacalin-related lectin 16 (531 aa).

4 consecutive Jacalin-type lectin domains span residues 1-87 (MDRS…YFTW), 90-232 (PTKM…YFTT), 235-378 (LISL…YFRP), and 385-528 (TEKV…NVLP).

Belongs to the jacalin lectin family.

This Arabidopsis thaliana (Mouse-ear cress) protein is Jacalin-related lectin 16 (JAL16).